We begin with the raw amino-acid sequence, 184 residues long: Orotate phosphoribosyltransferase (184 aa).

5-phospho-alpha-D-ribose 1-diphosphate contacts are provided by residues arginine 99, lysine 100, lysine 103, histidine 105, and 125-133 (EDTTTTGNS). Residues threonine 129 and arginine 157 each coordinate orotate.

The protein belongs to the purine/pyrimidine phosphoribosyltransferase family. PyrE subfamily. In terms of assembly, homodimer. Mg(2+) serves as cofactor.

The enzyme catalyses orotidine 5'-phosphate + diphosphate = orotate + 5-phospho-alpha-D-ribose 1-diphosphate. It participates in pyrimidine metabolism; UMP biosynthesis via de novo pathway; UMP from orotate: step 1/2. In terms of biological role, catalyzes the transfer of a ribosyl phosphate group from 5-phosphoribose 1-diphosphate to orotate, leading to the formation of orotidine monophosphate (OMP). This Corynebacterium glutamicum (strain R) protein is Orotate phosphoribosyltransferase.